We begin with the raw amino-acid sequence, 410 residues long: Probable protein S-acyltransferase 6 (410 aa).

Helical transmembrane passes span 45 to 65 (LGLT…FVAS) and 76 to 96 (GVSI…LLML). The tract at residues 108-129 (NSHPPEPEVVDGNTGSGTSQTP) is disordered. The region spanning 147–197 (KYCDTCMLYRPPRCSHCSICNNCVERFDHHCPWVGQCIAQRNYRFFFMFVF) is the DHHC domain. The active-site S-palmitoyl cysteine intermediate is the cysteine 177. Helical transmembrane passes span 191–211 (FFFM…AFCC) and 235–255 (SIAL…LTCF). Serine 325 carries the phosphoserine modification.

This sequence belongs to the DHHC palmitoyltransferase family.

The protein resides in the cell membrane. The catalysed reaction is L-cysteinyl-[protein] + hexadecanoyl-CoA = S-hexadecanoyl-L-cysteinyl-[protein] + CoA. Functionally, palmitoyl acyltransferase. This chain is Probable protein S-acyltransferase 6 (PAT06), found in Arabidopsis thaliana (Mouse-ear cress).